Here is a 1149-residue protein sequence, read N- to C-terminus: Potassium channel subfamily U member 1 (1149 aa).

Residues 1–24 are Extracellular-facing; the sequence is MFQTKLRNETWEDLPKMSCTTEIQ. A helical transmembrane segment spans residues 25–45; that stretch reads AAFILSSFVTFFSGLIILLIF. The Cytoplasmic segment spans residues 46-101; it reads RLIWRSVKKWQIIKGTGIILELFTSGTIARSHVRSLHFQGQFRDHIEMLLSAQTFV. A helical transmembrane segment spans residues 102-122; the sequence is GQVLVILVFVLSIGSLIIYFI. The Extracellular portion of the chain corresponds to 123–138; that stretch reads NSADPVGSCSSYEDKT. Residues 139-159 traverse the membrane as a helical segment; the sequence is IPIDLVFNAFFSFYFGLRFMA. Over 160-163 the chain is Cytoplasmic; that stretch reads ADDK. The chain crosses the membrane as a helical span at residues 164–184; that stretch reads IKFWLEMNSIVDIFTIPPTFI. Topologically, residues 185 to 188 are extracellular; sequence SYYL. A helical; Voltage-sensor transmembrane segment spans residues 189-209; the sequence is KSNWLGLRFLRALRLLELPQI. The Cytoplasmic portion of the chain corresponds to 210–226; it reads LQILRAIKTSNSVKFSK. The chain crosses the membrane as a helical span at residues 227–247; it reads LLSIILSTWFTAAGFIHLVEN. Residues 248–259 lie on the Extracellular side of the membrane; that stretch reads SGDPWLKGRNSQ. An intramembrane region (pore-forming) is located at residues 260–282; the sequence is NISYFESIYLVMATTSTVGFGDV. The short motif at 276–279 is the Selectivity for potassium element; it reads TVGF. Over 283-291 the chain is Extracellular; it reads VAKTSLGRT. The helical transmembrane segment at 292–312 threads the bilayer; sequence FIMFFTLGSLILFANYIPEMV. Topologically, residues 313-1149 are cytoplasmic; that stretch reads ELFANKRKYT…EDPFAYSEPL (837 aa). RCK N-terminal domains lie at 331-473 and 713-884; these read KKFI…DNII and RNHI…EGSL. 2 disordered regions span residues 828 to 854 and 1118 to 1149; these read QIDS…NEKS and SQIP…SEPL. A compositionally biased stretch (low complexity) spans 830–840; the sequence is DSSSDPSPSVS. Positions 1125-1135 are enriched in basic and acidic residues; the sequence is NAKENERKTSD.

The protein belongs to the potassium channel family. Calcium-activated (TC 1.A.1.3) subfamily. KCa5.1/KCNU1 sub-subfamily. As to quaternary structure, homotetramer; which constitutes the activated potassium channel. Interacts with LRRC52; this interaction changes channel gating properties, such as shifting gating to more negative potentials at a given pH. As to expression, testis-specific.

The protein localises to the cell membrane. It localises to the cell projection. It is found in the cilium. Its subcellular location is the flagellum membrane. It catalyses the reaction K(+)(in) = K(+)(out). Its activity is regulated as follows. Regulated by changes in cytosolic pH; activated by alkalization. Activated by intracellular Ca(2+). Despite strong sequence similarity, human KCNU1 channels are significantly more sensitive to activation by internal Ca(2+) and less pH-sensitive than mouse KCNU1. VU0546110 acts as a selective inhibitor. The auxiliary subunit LRRC52 shifts the activation of KCNU1 to more negative potentials at a given pH. Functionally, testis-specific potassium channel activated by both intracellular pH and membrane voltage that mediates export of K(+). Represents the primary spermatozoan K(+) current. The channel underlies a pH-triggered membrane hyperpolarization during the process of sperm capacitation, as sperm encounter the alkaline environment near the ovum in the female reproductive tract, thereby playing an essential for male fertility. This Homo sapiens (Human) protein is Potassium channel subfamily U member 1.